Here is a 513-residue protein sequence, read N- to C-terminus: Cytochrome P450 1A2 (513 aa).

S68 carries an O-linked (GlcNAc) serine glycan. Residue C456 participates in heme binding.

The protein belongs to the cytochrome P450 family. In terms of assembly, interacts with PGRMC1; the interaction requires PGRMC1 homodimerization. It depends on heme as a cofactor.

It is found in the endoplasmic reticulum membrane. Its subcellular location is the microsome membrane. It catalyses the reaction an organic molecule + reduced [NADPH--hemoprotein reductase] + O2 = an alcohol + oxidized [NADPH--hemoprotein reductase] + H2O + H(+). It carries out the reaction 17beta-estradiol + reduced [NADPH--hemoprotein reductase] + O2 = 2-hydroxy-17beta-estradiol + oxidized [NADPH--hemoprotein reductase] + H2O + H(+). The enzyme catalyses 17beta-estradiol + reduced [NADPH--hemoprotein reductase] + O2 = 4-hydroxy-17beta-estradiol + oxidized [NADPH--hemoprotein reductase] + H2O + H(+). The catalysed reaction is estrone + reduced [NADPH--hemoprotein reductase] + O2 = 2-hydroxyestrone + oxidized [NADPH--hemoprotein reductase] + H2O + H(+). It catalyses the reaction estrone + reduced [NADPH--hemoprotein reductase] + O2 = 4-hydroxyestrone + oxidized [NADPH--hemoprotein reductase] + H2O + H(+). It carries out the reaction cholesterol + reduced [NADPH--hemoprotein reductase] + O2 = 25-hydroxycholesterol + oxidized [NADPH--hemoprotein reductase] + H2O + H(+). The enzyme catalyses all-trans-retinol + reduced [NADPH--hemoprotein reductase] + O2 = all-trans-retinal + oxidized [NADPH--hemoprotein reductase] + 2 H2O + H(+). The catalysed reaction is all-trans-retinal + reduced [NADPH--hemoprotein reductase] + O2 = all-trans-retinoate + oxidized [NADPH--hemoprotein reductase] + H2O + 2 H(+). It catalyses the reaction (5Z,8Z,11Z,14Z)-eicosatetraenoate + reduced [NADPH--hemoprotein reductase] + O2 = (14R,15S)-epoxy-(5Z,8Z,11Z)-eicosatrienoate + oxidized [NADPH--hemoprotein reductase] + H2O + H(+). It carries out the reaction (5Z,8Z,11Z,14Z)-eicosatetraenoate + reduced [NADPH--hemoprotein reductase] + O2 = (14S,15R)-epoxy-(5Z,8Z,11Z)-eicosatrienoate + oxidized [NADPH--hemoprotein reductase] + H2O + H(+). The enzyme catalyses (5Z,8Z,11Z,14Z,17Z)-eicosapentaenoate + reduced [NADPH--hemoprotein reductase] + O2 = (17R,18S)-epoxy-(5Z,8Z,11Z,14Z)-eicosatetraenoate + oxidized [NADPH--hemoprotein reductase] + H2O + H(+). The catalysed reaction is (4Z,7Z,10Z,13Z,16Z,19Z)-docosahexaenoate + reduced [NADPH--hemoprotein reductase] + O2 = (19R,20S)-epoxy-(4Z,7Z,10Z,13Z,16Z)-docosapentaenoate + oxidized [NADPH--hemoprotein reductase] + H2O + H(+). It catalyses the reaction (5S)-hydroperoxy-(6E,8Z,11Z,14Z)-eicosatetraenoate = 5-oxo-(6E,8Z,11Z,14Z)-eicosatetraenoate + H2O. It carries out the reaction (12S)-hydroperoxy-(5Z,8Z,10E,14Z)-eicosatetraenoate = 12-oxo-(5Z,8Z,10E,14Z)-eicosatetraenoate + H2O. The enzyme catalyses (15S)-hydroperoxy-(5Z,8Z,11Z,13E)-eicosatetraenoate = 15-oxo-(5Z,8Z,11Z,13E)-eicosatetraenoate + H2O. The catalysed reaction is (13S)-hydroperoxy-(9Z,11E)-octadecadienoate = 13-oxo-(9Z,11E)-octadecadienoate + H2O. It catalyses the reaction (5Z,8Z,11Z,14Z)-eicosatetraenoate + reduced [NADPH--hemoprotein reductase] + O2 = 13-hydroxy-(5Z,8Z,11Z,14Z)-eicosatetraenoate + oxidized [NADPH--hemoprotein reductase] + H2O + H(+). It carries out the reaction (5Z,8Z,11Z,14Z)-eicosatetraenoate + reduced [NADPH--hemoprotein reductase] + O2 = 19-hydroxy-(5Z,8Z,11Z,14Z)-eicosatetraenoate + oxidized [NADPH--hemoprotein reductase] + H2O + H(+). The enzyme catalyses (9Z,12Z)-octadecadienoate + reduced [NADPH--hemoprotein reductase] + O2 = 11-hydroxy-(9Z,12Z)-octadecadienoate + oxidized [NADPH--hemoprotein reductase] + H2O + H(+). The protein operates within cofactor metabolism; retinol metabolism. It functions in the pathway steroid metabolism; cholesterol metabolism. Its pathway is lipid metabolism; arachidonate metabolism. Functionally, a cytochrome P450 monooxygenase involved in the metabolism of various endogenous substrates, including fatty acids, steroid hormones and vitamins. Mechanistically, uses molecular oxygen inserting one oxygen atom into a substrate, and reducing the second into a water molecule, with two electrons provided by NADPH via cytochrome P450 reductase (NADPH--hemoprotein reductase). Catalyzes the hydroxylation of carbon-hydrogen bonds. Exhibits high catalytic activity for the formation of hydroxyestrogens from estrone (E1) and 17beta-estradiol (E2), namely 2-hydroxy E1 and E2. Metabolizes cholesterol toward 25-hydroxycholesterol, a physiological regulator of cellular cholesterol homeostasis. May act as a major enzyme for all-trans retinoic acid biosynthesis in the liver. Catalyzes two successive oxidative transformation of all-trans retinol to all-trans retinal and then to the active form all-trans retinoic acid. Primarily catalyzes stereoselective epoxidation of the last double bond of polyunsaturated fatty acids (PUFA), displaying a strong preference for the (R,S) stereoisomer. Catalyzes bisallylic hydroxylation and omega-1 hydroxylation of PUFA. May also participate in eicosanoids metabolism by converting hydroperoxide species into oxo metabolites (lipoxygenase-like reaction, NADPH-independent). Plays a role in the oxidative metabolism of xenobiotics. Catalyzes the N-hydroxylation of heterocyclic amines and the O-deethylation of phenacetin. Metabolizes caffeine via N3-demethylation. This Rattus norvegicus (Rat) protein is Cytochrome P450 1A2 (Cyp1a2).